The following is a 206-amino-acid chain: Type III pantothenate kinase (206 aa).

5–12 (DIGNSTAK) provides a ligand contact to ATP. Substrate-binding positions include Y67 and 72 to 75 (GVDR). D74 serves as the catalytic Proton acceptor. D89 is a binding site for K(+). S92 is an ATP binding site. T144 serves as a coordination point for substrate.

The protein belongs to the type III pantothenate kinase family. In terms of assembly, homodimer. NH4(+) serves as cofactor. K(+) is required as a cofactor.

The protein resides in the cytoplasm. It carries out the reaction (R)-pantothenate + ATP = (R)-4'-phosphopantothenate + ADP + H(+). It functions in the pathway cofactor biosynthesis; coenzyme A biosynthesis; CoA from (R)-pantothenate: step 1/5. Catalyzes the phosphorylation of pantothenate (Pan), the first step in CoA biosynthesis. This is Type III pantothenate kinase from Campylobacter hominis (strain ATCC BAA-381 / DSM 21671 / CCUG 45161 / LMG 19568 / NCTC 13146 / CH001A).